A 232-amino-acid chain; its full sequence is Ribosome maturation protein SDO1 homolog (232 aa).

Belongs to the SDO1/SBDS family.

The sequence is that of Ribosome maturation protein SDO1 homolog from Methanothermobacter thermautotrophicus (strain ATCC 29096 / DSM 1053 / JCM 10044 / NBRC 100330 / Delta H) (Methanobacterium thermoautotrophicum).